Here is a 395-residue protein sequence, read N- to C-terminus: Thyroid hormone receptor beta (395 aa).

Residues 1–31 (MSEPAENCSPRWKDEAIQNGYIPSYLDKDEL) form a modulating region. Zn(2+)-binding residues include Cys32, Cys35, Cys49, Cys52, Cys70, Cys76, Cys86, and Cys89. NR C4-type zinc fingers lie at residues 32–52 (CVVC…CEGC) and 70–94 (CKYE…FKKC). The nuclear receptor DNA-binding region spans 32–99 (CVVCGDKATG…RFKKCIAVGM (68 aa)). The region spanning 142 to 395 (EEWDLIRMVT…PPLFLEVFED (254 aa)) is the NR LBD domain. 3,3',5-triiodo-L-thyronine-binding residues include Arg216, Asn265, and His369. L-thyroxine is bound by residues Arg216, Asn265, and His369.

The protein belongs to the nuclear hormone receptor family. NR1 subfamily.

Its subcellular location is the nucleus. Its function is as follows. Nuclear hormone receptor that can act as a repressor or activator of transcription. High affinity receptor for thyroid hormones, including triiodothyronine and thyroxine. This is Thyroid hormone receptor beta (thrb) from Paralichthys olivaceus (Bastard halibut).